The primary structure comprises 61 residues: Small ribosomal subunit protein uS14 (61 aa).

Residues Cys24, Cys27, Cys40, and Cys43 each contribute to the Zn(2+) site.

It belongs to the universal ribosomal protein uS14 family. Zinc-binding uS14 subfamily. In terms of assembly, part of the 30S ribosomal subunit. Contacts proteins S3 and S10. Zn(2+) serves as cofactor.

In terms of biological role, binds 16S rRNA, required for the assembly of 30S particles and may also be responsible for determining the conformation of the 16S rRNA at the A site. This Acetivibrio thermocellus (strain ATCC 27405 / DSM 1237 / JCM 9322 / NBRC 103400 / NCIMB 10682 / NRRL B-4536 / VPI 7372) (Clostridium thermocellum) protein is Small ribosomal subunit protein uS14.